The primary structure comprises 260 residues: Opacity protein opA58 (260 aa).

The signal sequence occupies residues Met-1–Ala-23.

This sequence belongs to the opacity porin family.

It is found in the cell outer membrane. Functionally, implicated in a number of adherence functions. OPA proteins are implicated in pathogenesis and are subject to phase variation. The polypeptide is Opacity protein opA58 (opaJ) (Neisseria gonorrhoeae).